A 528-amino-acid polypeptide reads, in one-letter code: Probable serine/threonine-protein kinase 380R (528 aa).

Residues 70–96 (VKIPKSKSPPKVKSPKRKKSPVRRRVS) are disordered. Basic residues predominate over residues 73-95 (PKSKSPPKVKSPKRKKSPVRRRV). The Protein kinase domain maps to 156–507 (FTNVKAVGKG…LANVLIHKIF (352 aa)). Residues 162-170 (VGKGSFGTV) and lysine 187 each bind ATP. Catalysis depends on aspartate 302, which acts as the Proton acceptor.

The protein belongs to the protein kinase superfamily. Ser/Thr protein kinase family.

It carries out the reaction L-seryl-[protein] + ATP = O-phospho-L-seryl-[protein] + ADP + H(+). The catalysed reaction is L-threonyl-[protein] + ATP = O-phospho-L-threonyl-[protein] + ADP + H(+). In Invertebrate iridescent virus 6 (IIV-6), this protein is Probable serine/threonine-protein kinase 380R.